The chain runs to 232 residues: Orotate phosphoribosyltransferase (232 aa).

5-phospho-alpha-D-ribose 1-diphosphate is bound by residues Arg-107, Lys-108, Lys-111, His-113, and 133 to 141; that span reads EDLTTAGGS. Thr-137 is an orotate binding site.

The protein belongs to the purine/pyrimidine phosphoribosyltransferase family. PyrE subfamily. In terms of assembly, homodimer. Requires Mg(2+) as cofactor.

It catalyses the reaction orotidine 5'-phosphate + diphosphate = orotate + 5-phospho-alpha-D-ribose 1-diphosphate. Its pathway is pyrimidine metabolism; UMP biosynthesis via de novo pathway; UMP from orotate: step 1/2. In terms of biological role, catalyzes the transfer of a ribosyl phosphate group from 5-phosphoribose 1-diphosphate to orotate, leading to the formation of orotidine monophosphate (OMP). The chain is Orotate phosphoribosyltransferase from Sinorhizobium fredii (strain NBRC 101917 / NGR234).